An 880-amino-acid polypeptide reads, in one-letter code: Interference hedgehog (880 aa).

Residues 1–20 (MTLLTSSLLLFSLLTSRLEA) form the signal peptide. At 21 to 703 (IPVLEKSPAH…ETFNMSPMLT (683 aa)) the chain is on the extracellular side. Ig-like C2-type domains are found at residues 45-142 (PGVR…TARL), 155-232 (PESP…ERIQ), 252-340 (PHLL…YIKV), and 346-432 (PQIV…LQVN). Disulfide bonds link cysteine 68/cysteine 126, cysteine 173/cysteine 220, cysteine 276/cysteine 324, and cysteine 367/cysteine 414. Residues asparagine 102 and asparagine 209 are each glycosylated (N-linked (GlcNAc...) asparagine). The tract at residues 429 to 467 (LQVNPKQIQEPRESGGTHRPNPNQGSKHKQMYPPTPPNV) is disordered. Fibronectin type-III domains follow at residues 461–567 (PPTP…LQPG) and 575–670 (VPEL…TQRP). An N-linked (GlcNAc...) asparagine glycan is attached at asparagine 466. Heparin is bound by residues arginine 497, lysine 501, lysine 503, and arginine 541. N-linked (GlcNAc...) asparagine glycosylation occurs at asparagine 557. The segment at 662–692 (LKQGRTQRPKTSTTEEPTLQMGDRDTTTPSH) is disordered. Residues 665 to 678 (GRTQRPKTSTTEEP) show a composition bias toward polar residues. Residue asparagine 693 is glycosylated (N-linked (GlcNAc...) asparagine). The chain crosses the membrane as a helical span at residues 704–724 (GTIGGGAVLILLLISTCLCVC). Over 725–880 (RRRNSRSRGN…SSGSLNSVGV (156 aa)) the chain is Cytoplasmic. Disordered stretches follow at residues 728-762 (NSRS…QRQR) and 775-880 (QQQQ…SVGV). 2 stretches are compositionally biased toward low complexity: residues 823–837 (RAGG…NNNN) and 864–880 (SSRS…SVGV).

The protein belongs to the immunoglobulin superfamily. IHOG family. As to quaternary structure, homodimer. Heterotetramer; 2 iHog chains bind 2 hh chains when facilitated by heparin, heparin is required to promote high-affinity interactions between hh and iHog.

Its subcellular location is the membrane. Its function is as follows. Mediates response to the active Hedgehog (Hh) protein signal in embryos, functioning upstream or at the level of patched (ptc). This chain is Interference hedgehog, found in Drosophila simulans (Fruit fly).